A 217-amino-acid polypeptide reads, in one-letter code: RNA chaperone ProQ (217 aa).

Residues 105 to 166 (EAKARVQAQR…PREEQHTPVS (62 aa)) are disordered. Over residues 121–131 (KRERKPRPTTP) the composition is skewed to basic residues. Positions 132 to 162 (RRKEGAERKPRAQKPVEKAPKTVKAPREEQH) are enriched in basic and acidic residues.

The protein belongs to the ProQ family.

Its subcellular location is the cytoplasm. Its function is as follows. RNA chaperone with significant RNA binding, RNA strand exchange and RNA duplexing activities. May regulate ProP activity through an RNA-based, post-transcriptional mechanism. This is RNA chaperone ProQ from Escherichia coli O8 (strain IAI1).